The following is a 293-amino-acid chain: Elongation factor Ts (293 aa).

The segment at 79-82 is involved in Mg(2+) ion dislocation from EF-Tu; the sequence is TDFV.

This sequence belongs to the EF-Ts family.

The protein resides in the cytoplasm. Functionally, associates with the EF-Tu.GDP complex and induces the exchange of GDP to GTP. It remains bound to the aminoacyl-tRNA.EF-Tu.GTP complex up to the GTP hydrolysis stage on the ribosome. This is Elongation factor Ts (tsf) from Halalkalibacterium halodurans (strain ATCC BAA-125 / DSM 18197 / FERM 7344 / JCM 9153 / C-125) (Bacillus halodurans).